The following is a 100-amino-acid chain: MYAIVKTGGKQYKVAEGDLVKVEKIEGEPGSSVALTPVLVVDGANVTTGDKLASVNVNAEIVEHVRGPKIRGMHYRNKTGYKRRFGHRQSLTVLKVTGIK.

Belongs to the bacterial ribosomal protein bL21 family. As to quaternary structure, part of the 50S ribosomal subunit. Contacts protein L20.

This protein binds to 23S rRNA in the presence of protein L20. This is Large ribosomal subunit protein bL21 from Corynebacterium jeikeium (strain K411).